The following is a 416-amino-acid chain: MIHPDPTLFGHDPWWLILAKAVGVFVFLVLTVLAAILIERKVLGRMQMRFGPNRVGPKGLLQSLADGIKLALKEGITPAGVDKPVYLLAPVISVIPAFLAFAVIPMGGEVSVFGHRTALQLTDLAVAVLYILAVTSVGVYGIVLAGWASGSTYPLLGGLRSSAQVVSYEIAMALSFATVFLYAGTMSTSGIVAAQTSTWYVFLLLPSFLVYVTSMVGETNRAPFDLPEAEGELVGGFHTEYSSLKFAMFMLAEYVNMTTVSALATTMFLGGWHAPWPISLWEGANSGWWPLLWFTAKVWVFLFVYIWLRGTLPRLRYDQFMAIGWKMLIPVSLAWIMIVATAHSLRTTGHGGWASGLLIAGTVLTFGLAVILWRTMRFRADRTVPARTAADVFPIPPIPGRAGTARTPESRETTDA.

Transmembrane regions (helical) follow at residues L16–I36, P84–I104, L124–L144, V165–T185, S197–G217, V260–L280, W288–L308, F320–A340, and W353–W373.

It belongs to the complex I subunit 1 family. As to quaternary structure, NDH-1 is composed of 14 different subunits. Subunits NuoA, H, J, K, L, M, N constitute the membrane sector of the complex.

The protein resides in the cell membrane. The enzyme catalyses a quinone + NADH + 5 H(+)(in) = a quinol + NAD(+) + 4 H(+)(out). Functionally, NDH-1 shuttles electrons from NADH, via FMN and iron-sulfur (Fe-S) centers, to quinones in the respiratory chain. The immediate electron acceptor for the enzyme in this species is believed to be menaquinone. Couples the redox reaction to proton translocation (for every two electrons transferred, four hydrogen ions are translocated across the cytoplasmic membrane), and thus conserves the redox energy in a proton gradient. This subunit may bind ubiquinone. The chain is NADH-quinone oxidoreductase subunit H from Mycobacterium sp. (strain KMS).